Consider the following 464-residue polypeptide: 3-isopropylmalate dehydratase large subunit (464 aa).

[4Fe-4S] cluster is bound by residues Cys-337, Cys-397, and Cys-400.

The protein belongs to the aconitase/IPM isomerase family. LeuC type 1 subfamily. In terms of assembly, heterodimer of LeuC and LeuD. The cofactor is [4Fe-4S] cluster.

The catalysed reaction is (2R,3S)-3-isopropylmalate = (2S)-2-isopropylmalate. Its pathway is amino-acid biosynthesis; L-leucine biosynthesis; L-leucine from 3-methyl-2-oxobutanoate: step 2/4. Catalyzes the isomerization between 2-isopropylmalate and 3-isopropylmalate, via the formation of 2-isopropylmaleate. This chain is 3-isopropylmalate dehydratase large subunit, found in Bacillus cytotoxicus (strain DSM 22905 / CIP 110041 / 391-98 / NVH 391-98).